The chain runs to 163 residues: Large ribosomal subunit protein uL10 (163 aa).

It belongs to the universal ribosomal protein uL10 family. Part of the ribosomal stalk of the 50S ribosomal subunit. The N-terminus interacts with L11 and the large rRNA to form the base of the stalk. The C-terminus forms an elongated spine to which L12 dimers bind in a sequential fashion forming a multimeric L10(L12)X complex.

Its function is as follows. Forms part of the ribosomal stalk, playing a central role in the interaction of the ribosome with GTP-bound translation factors. This Blochmanniella pennsylvanica (strain BPEN) protein is Large ribosomal subunit protein uL10.